The sequence spans 134 residues: Histone-like protein Rv3852 (134 aa).

The span at 1 to 10 (MPDPQDRPDS) shows a compositional bias: basic and acidic residues. The interval 1 to 68 (MPDPQDRPDS…PAEAPVSLQQ (68 aa)) is disordered. The span at 23-48 (LPAKKAAKKAPARKTPAKKAPAKKTP) shows a compositional bias: basic residues. A helical transmembrane segment spans residues 111–128 (PVPLIVAVTLSLLALLLI).

As to quaternary structure, homodimer in solution. Is probably able to self-associate in higher oligomers along the DNA molecules. Interacts with the N-terminal region of Wag31.

The protein resides in the cell inner membrane. Its activity is regulated as follows. Can interact directly in vitro with the compound agrimophol, a phloroglucinol from the A.pilosa plant, whose extracts have been used in traditional Chinese medicine to treat pulmonary infections. Interaction with agrimophol leads to disruption of Rv3852's DNA binding function. In terms of biological role, binds DNA in vitro. It has been proposed that Rv3852 plays a role in nucleoid organization and may function as an anchorage to tether the DNA to the membrane. However, it was later shown that it has no influence on nucleoid shape or compaction. It plays no role in virulence and only a minor role in the control of transcription, and does not appear to function as a typical nucleoid-associated protein. Functionally, interacts with Wag31, an important cell shape and cell wall integrity determinant, and facilitates the localization of Wag31 to the cell poles and the cell wall, thus enabling nascent peptidoglycan synthesis. This chain is Histone-like protein Rv3852, found in Mycobacterium tuberculosis (strain ATCC 25618 / H37Rv).